Consider the following 229-residue polypeptide: High molecular weight rubredoxin (229 aa).

Residues Met-1–Thr-158 form a flavodoxin-reductase-like region. One can recognise a Rubredoxin-like domain in the interval Ser-178–Ile-229. Residues Cys-183, Cys-186, Cys-216, and Cys-219 each coordinate Fe cation.

The protein in the N-terminal section; belongs to the flavodoxin reductase family. In terms of assembly, homodimer. Fe cation is required as a cofactor. The cofactor is FMN.

In terms of biological role, has nitric oxide reductase activity in combination with FprA; probably involved in nitrosative stress protection. Acts as an NADH:FprA oxidoreductase. The chain is High molecular weight rubredoxin (hrb) from Moorella thermoacetica (strain ATCC 39073 / JCM 9320).